Reading from the N-terminus, the 428-residue chain is Histidinol dehydrogenase homolog (428 aa).

Zn(2+) contacts are provided by Q250 and H253. Active-site proton acceptor residues include E320 and H321. Positions 354 and 413 each coordinate Zn(2+).

The protein belongs to the histidinol dehydrogenase family. Zn(2+) is required as a cofactor.

The chain is Histidinol dehydrogenase homolog from Pelagibacter ubique (strain HTCC1062).